Here is a 174-residue protein sequence, read N- to C-terminus: Endoribonuclease YbeY (174 aa).

H129, H133, and H139 together coordinate Zn(2+).

It belongs to the endoribonuclease YbeY family. It depends on Zn(2+) as a cofactor.

The protein resides in the cytoplasm. Functionally, single strand-specific metallo-endoribonuclease involved in late-stage 70S ribosome quality control and in maturation of the 3' terminus of the 16S rRNA. This is Endoribonuclease YbeY from Lactobacillus delbrueckii subsp. bulgaricus (strain ATCC 11842 / DSM 20081 / BCRC 10696 / JCM 1002 / NBRC 13953 / NCIMB 11778 / NCTC 12712 / WDCM 00102 / Lb 14).